A 183-amino-acid polypeptide reads, in one-letter code: Maltose O-acetyltransferase (183 aa).

Position 83 (Asn83) interacts with acetyl-CoA. The Proton donor/acceptor role is filled by His113. Residues Gly140, Ser158, 163–164, Arg178, and Lys181 contribute to the acetyl-CoA site; that span reads TK.

The protein belongs to the transferase hexapeptide repeat family. As to quaternary structure, homodimer.

The enzyme catalyses D-maltose + acetyl-CoA = 1-O-acetylmaltose + CoA. Its function is as follows. Catalyzes the CoA-dependent transfer of an acetyl group to maltose and other sugars. Acetylates glucose exclusively at the C6 position and maltose at the C6 position of the non-reducing end glucosyl moiety. Is able to acetylate maltooligosaccharides. The polypeptide is Maltose O-acetyltransferase (maa) (Escherichia coli (strain K12)).